Consider the following 384-residue polypeptide: Endoglucanase (384 aa).

The N-terminal stretch at 1 to 25 (MTRRRLLHAGTLAGVAALLPAAALA) is a signal peptide. E63 functions as the Proton donor in the catalytic mechanism. Residue D124 is the Nucleophile of the active site.

Belongs to the glycosyl hydrolase 8 (cellulase D) family.

It is found in the secreted. It carries out the reaction Endohydrolysis of (1-&gt;4)-beta-D-glucosidic linkages in cellulose, lichenin and cereal beta-D-glucans.. It functions in the pathway glycan metabolism; bacterial cellulose biosynthesis. Its function is as follows. Hydrolyzes carboxymethylcellulose. This Xanthomonas axonopodis pv. citri (strain 306) protein is Endoglucanase (bcsZ).